The sequence spans 159 residues: Neuroglobin-1 (159 aa).

The 149-residue stretch at 3-151 (KLTEKEKELI…VVAAMSRGWA (149 aa)) folds into the Globin domain. Positions 66 and 98 each coordinate heme b.

The protein belongs to the globin family. Monomer. Homodimers and homotetramers. Mainly monomeric but also detected as part of homodimers and homotetramers.

It localises to the cytoplasm. It is found in the cytosol. The protein resides in the mitochondrion matrix. It catalyses the reaction Fe(III)-heme b-[protein] + nitric oxide + H2O = Fe(II)-heme b-[protein] + nitrite + 2 H(+). Its function is as follows. Monomeric globin with a bis-histidyl six-coordinate heme-iron atom through which it can bind dioxygen, carbon monoxide and nitric oxide. Could help transport oxygen and increase its availability to the metabolically active neuronal tissues, though its low quantity in tissues as well as its high affinity for dioxygen, which may limit its oxygen-releasing ability, argue against it. The ferrous/deoxygenated form exhibits a nitrite reductase activity and it could produce nitric oxide which in turn inhibits cellular respiration in response to hypoxia. In its ferrous/deoxygenated state, it may also exhibit GDI (Guanine nucleotide Dissociation Inhibitor) activity toward heterotrimeric G-alpha proteins, thereby regulating signal transduction to facilitate neuroprotective responses in the wake of hypoxia and associated oxidative stress. The polypeptide is Neuroglobin-1 (ngb1) (Oncorhynchus mykiss (Rainbow trout)).